The sequence spans 451 residues: BAHD acyltransferase At3g29680 (451 aa).

Active-site proton acceptor residues include His-161 and Asp-393.

Belongs to the plant acyltransferase family.

This Arabidopsis thaliana (Mouse-ear cress) protein is BAHD acyltransferase At3g29680.